Reading from the N-terminus, the 59-residue chain is UPF0434 protein SO_2800 (59 aa).

It belongs to the UPF0434 family.

The polypeptide is UPF0434 protein SO_2800 (Shewanella oneidensis (strain ATCC 700550 / JCM 31522 / CIP 106686 / LMG 19005 / NCIMB 14063 / MR-1)).